Reading from the N-terminus, the 201-residue chain is MSKPVEFEMLVDALKSLPGVGTKNAKKWAFFLLQQDQKYIDDFIKRIKDAKTNIIKCKYCSNFGNKDECDICSNDYRDFTKLMIVTTNEDLERIESANIYNGLYHITNGEVSLRKNVVIEHTNIKIIKERVLNGSFKEIIIATSYTHDGEVTADYIVKMLEDIKDIQIYRIGFGIPLNSSIDYADDETLKQSIANKRKIRI.

A C4-type zinc finger spans residues 57-72; sequence CKYCSNFGNKDECDIC. One can recognise a Toprim domain in the interval 80–176; the sequence is TKLMIVTTNE…QIYRIGFGIP (97 aa).

The protein belongs to the RecR family.

Its function is as follows. May play a role in DNA repair. It seems to be involved in an RecBC-independent recombinational process of DNA repair. It may act with RecF and RecO. The polypeptide is Recombination protein RecR (Ureaplasma urealyticum serovar 10 (strain ATCC 33699 / Western)).